The following is a 104-amino-acid chain: uncharacterized protein (104 aa).

To M.jannaschii MJ1511.

This is an uncharacterized protein from Methanocaldococcus jannaschii (strain ATCC 43067 / DSM 2661 / JAL-1 / JCM 10045 / NBRC 100440) (Methanococcus jannaschii).